Here is a 186-residue protein sequence, read N- to C-terminus: MRRAEIERETKETYVKIALNLDGEGSFLGDFPIPYYKHLISTLCFYAGWDVEINAKGDIEVDPHHLIEDTGITLGKAFNSAILKSSFLRFSNKVIPMDEALVMVVVDISGRPYLEIKDDKEILKGRLIKEFLRGFVNNSQMTLHIWILSGENLHHVEEAIFKALGLALGEASKEVSNLKSTKGKIW.

This sequence belongs to the imidazoleglycerol-phosphate dehydratase family.

Its subcellular location is the cytoplasm. It carries out the reaction D-erythro-1-(imidazol-4-yl)glycerol 3-phosphate = 3-(imidazol-4-yl)-2-oxopropyl phosphate + H2O. The protein operates within amino-acid biosynthesis; L-histidine biosynthesis; L-histidine from 5-phospho-alpha-D-ribose 1-diphosphate: step 6/9. The sequence is that of Imidazoleglycerol-phosphate dehydratase from Dictyoglomus thermophilum (strain ATCC 35947 / DSM 3960 / H-6-12).